Consider the following 125-residue polypeptide: Oxytocin-neurophysin 1 (125 aa).

Residues M1 to A19 form the signal peptide. C20 and C25 are oxidised to a cystine. G28 is modified (glycine amide). 7 disulfides stabilise this stretch: C41–C85, C44–C58, C52–C75, C59–C65, C92–C104, C98–C116, and C105–C110.

Belongs to the vasopressin/oxytocin family. Interacts with oxytocin receptor (Ki=1.5 nM). Interacts with vasopressin V1aR/AVPR1A (Ki=37 nM), V1bR/AVPR1B (Ki=222 nM), and V2R/AVPR2 receptors (Ki=823 nM).

Its function is as follows. Neurophysin 1 specifically binds oxytocin. Oxytocin causes contraction of the smooth muscle of the uterus and of the mammary gland. Acts by binding to oxytocin receptor (OXTR). The sequence is that of Oxytocin-neurophysin 1 (OXT) from Ovis aries (Sheep).